We begin with the raw amino-acid sequence, 299 residues long: UDP-N-acetylenolpyruvoylglucosamine reductase (299 aa).

Residues Lys28 to Gly193 form the FAD-binding PCMH-type domain. Arg172 is an active-site residue. Ser222 serves as the catalytic Proton donor. The active site involves Glu292.

FAD serves as cofactor.

The protein localises to the cytoplasm. It carries out the reaction UDP-N-acetyl-alpha-D-muramate + NADP(+) = UDP-N-acetyl-3-O-(1-carboxyvinyl)-alpha-D-glucosamine + NADPH + H(+). It functions in the pathway cell wall biogenesis; peptidoglycan biosynthesis. Functionally, cell wall formation. The chain is UDP-N-acetylenolpyruvoylglucosamine reductase from Lactococcus lactis subsp. cremoris (strain MG1363).